The chain runs to 56 residues: Large ribosomal subunit protein bL32 (56 aa).

The disordered stretch occupies residues 1 to 40; sequence MAVQQNKKSRSKRGMRRSHDSLGTAQLSVDATSGELHRRH. Residues 7 to 16 show a composition bias toward basic residues; it reads KKSRSKRGMR. The segment covering 21–31 has biased composition (polar residues); the sequence is SLGTAQLSVDA.

Belongs to the bacterial ribosomal protein bL32 family.

In Shewanella halifaxensis (strain HAW-EB4), this protein is Large ribosomal subunit protein bL32.